A 735-amino-acid polypeptide reads, in one-letter code: MSGFDDLGIYYSDSFGGEQPVGDDGQAKKSQLKKRFREFLRQYRVGTDRTGFTFKYRDELKRHYNLGEYWIEVEMEDLASFDEDLADYLYKQPTEHLQLLEEAAQEVADEVTRPRPAGEETIQEIQVMLRSDANPANIRNLKSEQMSHLVKIPGIIIAATAVRAKATKISIQCRSCRNTIGNIAVRPGLEGYAMPRKCNTEQAGRPKCPLDPYFIIPDKCKCVDFQTLKLQESPDAVPHGELPRHMQLYCDRYLCDKVVPGNRVTIMGIYSIQKSGKTSTKGRDRVGVGIRSSYIRVVGIQVDTEGTGRSAAGTITPQEEEEFRRLAVKPDIYETVAKSIAPSIYGSTDIKKAIACLLFGGSRKRLPDGLTRRGDVNLLMLGDPGTAKSQLLKFVERCSPIGVYTSGKGSSAAGLTASVMRDPVSRNFIMEGGAMVLADGGVVCIDEFDKMREDDRVAIHEAMEQQTISIAKAGITTTLNSRCSVLAAANSVYGRWDDTKGEENIDFMPTILSRFDMIFIVKDEHNEQRDMTLAKHVMNVHLSARTQSSSVEGEVDLNTLKKFIAYCRAKCGPRLSAEAAEKLKNRYILMRSGARDHERETEKRSSIPITVRQLEAVVRISESLGKMKLQPFVTETDVEEALRLFQVSTLDAAMSGSLSGVEGFSTQEDQEMLSRIEKQLKRRFAIGSQVSEHSIIQDFLKQKYPEHAIHKVLNLMMRRGEIHHRLQRKVLYRLK.

The region spanning 332 to 538 (IYETVAKSIA…RDMTLAKHVM (207 aa)) is the MCM domain. Arg372 serves as a coordination point for ADP. An Arginine finger motif is present at residues 513 to 516 (SRFD).

Belongs to the MCM family. As to quaternary structure, component of the mcm2-7 complex (RLF-M). The complex forms a toroidal hexameric ring with the proposed subunit order mcm2-mcm6-mcm4-mcm7-mcm3-mcm5. The heterodimer of mmcm3/mcm5 interacts with mcm4, mmcm6, mcm7 and weakly with mcm2. Component of the CMG helicase complex, composed of the mcm2-7 complex, the GINS complex and cdc45.

Its subcellular location is the nucleus. The protein resides in the chromosome. It catalyses the reaction ATP + H2O = ADP + phosphate + H(+). In terms of biological role, acts as a component of the MCM2-7 complex (MCM complex) which is the replicative helicase essential for 'once per cell cycle' DNA replication initiation and elongation in eukaryotic cells. Core component of CDC45-MCM-GINS (CMG) helicase, the molecular machine that unwinds template DNA during replication, and around which the replisome is built. The active ATPase sites in the MCM2-7 ring are formed through the interaction surfaces of two neighboring subunits such that a critical structure of a conserved arginine finger motif is provided in trans relative to the ATP-binding site of the Walker A box of the adjacent subunit. The six ATPase active sites, however, are likely to contribute differentially to the complex helicase activity. The protein is DNA replication licensing factor mcm5-B (mcm5-b) of Xenopus laevis (African clawed frog).